A 620-amino-acid chain; its full sequence is Siderophore iron transporter ARN2 (620 aa).

The segment at 1–42 (MIEVPEDNRSSQTKRKNTEKNCNELMVDEKMDDDSSPRDEMK) is disordered. Over residues 16-42 (KNTEKNCNELMVDEKMDDDSSPRDEMK) the composition is skewed to basic and acidic residues. The next 14 membrane-spanning stretches (helical) occupy residues 71-93 (IFLFSAFICTFAYGLDSSIRGTY), 106-128 (LISTVSVIVLMISAVSQVIFGGL), 135-152 (LTLFLVSIVLYIVGTIIQ), 162-184 (AAGAVFYYVGLVGVMLQVVLMLS), 191-213 (WRLFYTLIPSWPSIITTWVSGSV), 223-245 (WSWNIAMWAFIFPLCCIPLILCM), 286-308 (VVGVLLFTAGVGCILVPLTLAGG), 318-335 (IIGPFVLGFVLVPGFIYW), 355-377 (VWAPLGIMFFICFVYQMAAGYLY), 392-414 (TRIINLYSFVTAVVAPFLGLIVT), 421-438 (SYIIFGGSLYFITMGLFY), 448-470 (GGIIAGMVIWGLSSCLFDYPTIV), 491-513 (VFRIGGAVAAAISGAIWTQSLYP), and 561-578 (VIVALVFSAPMFLLTFCV).

This sequence belongs to the major facilitator superfamily.

The protein resides in the endosome membrane. In terms of biological role, involved in the transport of siderophore triacestylfusarinine C and so has a role in iron homeostasis. In Saccharomyces cerevisiae (strain ATCC 204508 / S288c) (Baker's yeast), this protein is Siderophore iron transporter ARN2 (ARN2).